Consider the following 650-residue polypeptide: DNA gyrase subunit B (650 aa).

The Toprim domain occupies 429–543; sequence NELFIVEGDS…AGYVYIAQPP (115 aa). Mg(2+) contacts are provided by Glu-435, Asp-508, and Asp-510.

Belongs to the type II topoisomerase GyrB family. In terms of assembly, heterotetramer, composed of two GyrA and two GyrB chains. In the heterotetramer, GyrA contains the active site tyrosine that forms a transient covalent intermediate with DNA, while GyrB binds cofactors and catalyzes ATP hydrolysis. The cofactor is Mg(2+). Requires Mn(2+) as cofactor. It depends on Ca(2+) as a cofactor.

It is found in the cytoplasm. The enzyme catalyses ATP-dependent breakage, passage and rejoining of double-stranded DNA.. Its function is as follows. A type II topoisomerase that negatively supercoils closed circular double-stranded (ds) DNA in an ATP-dependent manner to modulate DNA topology and maintain chromosomes in an underwound state. Negative supercoiling favors strand separation, and DNA replication, transcription, recombination and repair, all of which involve strand separation. Also able to catalyze the interconversion of other topological isomers of dsDNA rings, including catenanes and knotted rings. Type II topoisomerases break and join 2 DNA strands simultaneously in an ATP-dependent manner. This chain is DNA gyrase subunit B, found in Streptococcus pyogenes serotype M1.